We begin with the raw amino-acid sequence, 73 residues long: MFTMKKSLLLVFFLGTIALSLCEEERGADDDNGGEITDEEIKRGILTDTLKGAAKNVAGVLLDKLKCKITGGC.

The N-terminal stretch at 1 to 22 is a signal peptide; the sequence is MFTMKKSLLLVFFLGTIALSLC. Residues 23-41 constitute a propeptide that is removed on maturation; the sequence is EEERGADDDNGGEITDEEI. C67 and C73 are joined by a disulfide.

As to expression, expressed by the skin glands.

The protein localises to the secreted. Its function is as follows. Antimicrobial peptide. The protein is Pelophylaxin-1 of Pelophylax fukienensis (Fukien gold-striped pond frog).